We begin with the raw amino-acid sequence, 118 residues long: uncharacterized protein (118 aa).

An N-terminal signal peptide occupies residues 1–22 (MKMSYLRSGIVGFLAGASLSYA). Residues 41 to 71 (TATEALETDKQLYKKIEKKIEELESSCVKKS) are a coiled coil.

This is an uncharacterized protein from Schizosaccharomyces pombe (strain 972 / ATCC 24843) (Fission yeast).